A 288-amino-acid chain; its full sequence is uncharacterized protein (288 aa).

This is an uncharacterized protein from Haemophilus influenzae (strain ATCC 51907 / DSM 11121 / KW20 / Rd).